The sequence spans 732 residues: E3 ubiquitin-protein ligase DCST1 (732 aa).

Over 1-46 the chain is Cytoplasmic; that stretch reads MAFLSSTLHSLGIFEKISRIKEVLKNRLLDLTKRRDQAREQQRKRP. Residues 47–67 form a helical membrane-spanning segment; that stretch reads HTIIQGLLLWSLPVSWIRFLW. At 68–76 the chain is on the extracellular side; it reads RQPGEFPVT. Residues 77–97 form a helical membrane-spanning segment; it reads AFLLGAGTGGLLAIGLFQLLV. Residues 98–107 lie on the Cytoplasmic side of the membrane; the sequence is NPMNIYEEQK. The chain crosses the membrane as a helical span at residues 108–128; it reads VVALYCLASLGAIGWGTSPHI. Topologically, residues 129–394 are extracellular; it reads RCASLLLVPK…VRDYVRQQET (266 aa). Residues Asn184, Asn217, Asn346, and Asn374 are each glycosylated (N-linked (GlcNAc...) asparagine). A helical transmembrane segment spans residues 395–415; that stretch reads YLQWAMGLLHVLLSCTFLLVF. At 416-489 the chain is on the cytoplasmic side; the sequence is HSAFSYMDHY…RYVIRELLET (74 aa). The chain crosses the membrane as a helical span at residues 490–510; the sequence is LPIVLLLLVLCAIDWALYSVF. Residues 511 to 576 are Extracellular-facing; the sequence is DTIRQHSFVQ…PQPISLNARD (66 aa). Asn551 carries an N-linked (GlcNAc...) asparagine glycan. Residues 577–597 form a helical membrane-spanning segment; it reads YFKASLPTLLLVCLCLAQAFG. Residues 598 to 732 are Cytoplasmic-facing; that stretch reads YRLRRVIAAF…DSNDDAVYGD (135 aa). The RING-type; degenerate zinc finger occupies 672 to 711; that stretch reads CVVCQAMETPDSYVCPTPDCKALYCRSCWDDMQRLCPVCT.

Interacts with STAT2; the interaction results in STAT2 'Lys-48'-linked ubiquitination leading to its proteasomal degradation. Interacts with DCST2. Expressed in testis.

It localises to the cell membrane. The protein localises to the cytoplasmic vesicle. The protein resides in the secretory vesicle. It is found in the acrosome membrane. It carries out the reaction S-ubiquitinyl-[E2 ubiquitin-conjugating enzyme]-L-cysteine + [acceptor protein]-L-lysine = [E2 ubiquitin-conjugating enzyme]-L-cysteine + N(6)-ubiquitinyl-[acceptor protein]-L-lysine.. It participates in protein modification; protein ubiquitination. In terms of biological role, E3 ubiquitin-protein ligase which mediates 'Lys-48'-linked ubiquitination of STAT2 and induces its proteasomal degradation thereby negatively regulating type-I-interferon signaling. Essential sperm cell-surface protein required for sperm-egg fusion and fertilization. This chain is E3 ubiquitin-protein ligase DCST1 (Dcst1), found in Mus musculus (Mouse).